Here is a 159-residue protein sequence, read N- to C-terminus: Trafficking protein particle complex subunit 6A (159 aa).

The residue at position 33 (S33) is a Phosphoserine.

It belongs to the TRAPP small subunits family. BET3 subfamily. Part of the multisubunit transport protein particle (TRAPP) complex. Heterodimer with TRAPPC3. The heterodimer TRAPPC3-TRAPPC6A interacts with TRAPPC2L. Interacts with TRAPPC2L.

It localises to the golgi apparatus. The protein localises to the cis-Golgi network. It is found in the endoplasmic reticulum. Its function is as follows. May play a role in vesicular transport during the biogenesis of melanosomes. The protein is Trafficking protein particle complex subunit 6A of Homo sapiens (Human).